The following is a 687-amino-acid chain: MAASEENSALFPIFILTIMAIPLVPYTMVKLSGALSKKQRTIHCQCLECDRSGKYKRSLFKKISNFSTWSNLTLVLLWVVMIFLIYYTKNMSREAQVFDPFSILGLEPGVTDSEIKKAYRRLSIQYHPDKNPDPEANKYFVEFISKAYQALTDSVSRENFEKYGHPDGRQGFQMGIALPQFLLDIDGASGGILLLWIVGVCILLPLVIAVIYLSRSSKYTGNYVMHQTLSAYYYLMKPSLAPSKVMEVFTKAAEYMEIPVRRTDDEPLQKLFMSVRSELNLDLKNMKQEQAKFWKQHPAIVKTELLIQAQLTRESGVLSPALQGDFRRVLELAPRLLEELLKMAVIPRTAQGHGWLRPAVGVVELSQCIVQAVPLSARKSSGVSSEGISPFLQLPHFSDAVVKKIARKKVKSFQDLQEMRLEDRSELLTQVAGLSATDVEDIEKVLEMMPSITVDITCETEGEEGIQEGDIVTLQAWVTLKRPNGLVGALPHAPYFPFHKEENYWVLLADSVSNNVWFSQKVSFLDEGGAITAASKAISESMEGSGAGVKETNDAVREAIEKVKGGSRLVMGKLQAPAEGTYNLTCFCLCDTWIGCDKKQALKVKVLKRTRAGTRGLVSDEGAIAEEGMEEEDEIEEEDYDDDYESEYSEDEDEKKDMDEKRGSKKANGSVKQKKESSSEESGSEEE.

Residues 1–8 (MAASEENS) lie on the Lumenal side of the membrane. A helical membrane pass occupies residues 9–29 (ALFPIFILTIMAIPLVPYTMV). Residues 30 to 65 (KLSGALSKKQRTIHCQCLECDRSGKYKRSLFKKISN) lie on the Cytoplasmic side of the membrane. A helical transmembrane segment spans residues 66-86 (FSTWSNLTLVLLWVVMIFLIY). At 87–190 (YTKNMSREAQ…FLLDIDGASG (104 aa)) the chain is on the lumenal side. Asparagine 90 is a glycosylation site (N-linked (GlcNAc...) asparagine). Positions 99-164 (DPFSILGLEP…VSRENFEKYG (66 aa)) constitute a J domain. Residues 191 to 211 (GILLLWIVGVCILLPLVIAVI) traverse the membrane as a helical segment. The SEC63 domain maps to 205-603 (PLVIAVIYLS…IGCDKKQALK (399 aa)). The Cytoplasmic portion of the chain corresponds to 212–687 (YLSRSSKYTG…SSEESGSEEE (476 aa)). The disordered stretch occupies residues 619–687 (SDEGAIAEEG…SSEESGSEEE (69 aa)). A compositionally biased stretch (acidic residues) spans 623 to 654 (AIAEEGMEEEDEIEEEDYDDDYESEYSEDEDE).

In terms of assembly, interacts with OEP61/TPR7. Expressed in leaves, flower buds and flowers.

The protein localises to the endoplasmic reticulum membrane. Its function is as follows. Required for integral membrane and secreted preprotein translocation across the endoplasmic reticulum membrane. This chain is DnaJ protein ERDJ2A (ERDJ2A), found in Arabidopsis thaliana (Mouse-ear cress).